A 241-amino-acid chain; its full sequence is Eukaryotic translation initiation factor 3 subunit J (241 aa).

The segment at 1 to 97 is disordered; it reads MEEDWEQLSE…EEEDMTPEQK (97 aa). The segment covering 28–45 has biased composition (acidic residues); the sequence is GEDEEEEVKDSWEDEDEL. Positions 31 to 119 form a coiled coil; sequence EEEEVKDSWE…ESDLKNALDT (89 aa). Basic and acidic residues-rich tracts occupy residues 46-58 and 69-87; these read EEKKDEEKVETPK and IADKEKLKQEEAERRRLEK.

It belongs to the eIF-3 subunit J family. Component of the eukaryotic translation initiation factor 3 (eIF-3) complex.

The protein resides in the cytoplasm. Component of the eukaryotic translation initiation factor 3 (eIF-3) complex, which is involved in protein synthesis of a specialized repertoire of mRNAs and, together with other initiation factors, stimulates binding of mRNA and methionyl-tRNAi to the 40S ribosome. The eIF-3 complex specifically targets and initiates translation of a subset of mRNAs involved in cell proliferation. This is Eukaryotic translation initiation factor 3 subunit J from Aedes aegypti (Yellowfever mosquito).